The chain runs to 464 residues: Signal recognition particle 54 kDa protein (464 aa).

GTP-binding positions include 104–111 (GLQGSGKT), 184–188 (DTAGR), and 242–245 (TKLD).

The protein belongs to the GTP-binding SRP family. SRP54 subfamily. In terms of assembly, part of the signal recognition particle protein translocation system, which is composed of SRP and FtsY. Archaeal SRP consists of a 7S RNA molecule of 300 nucleotides and two protein subunits: SRP54 and SRP19.

It localises to the cytoplasm. The enzyme catalyses GTP + H2O = GDP + phosphate + H(+). In terms of biological role, involved in targeting and insertion of nascent membrane proteins into the cytoplasmic membrane. Binds to the hydrophobic signal sequence of the ribosome-nascent chain (RNC) as it emerges from the ribosomes. The SRP-RNC complex is then targeted to the cytoplasmic membrane where it interacts with the SRP receptor FtsY. In Halorubrum lacusprofundi (strain ATCC 49239 / DSM 5036 / JCM 8891 / ACAM 34), this protein is Signal recognition particle 54 kDa protein.